We begin with the raw amino-acid sequence, 342 residues long: Holliday junction branch migration complex subunit RuvB (342 aa).

Positions Met1 to Tyr179 are large ATPase domain (RuvB-L). ATP contacts are provided by residues Ile18, Arg19, Gly60, Lys63, Thr64, Thr65, Glu126–Phe128, Arg169, Tyr179, and Arg216. Thr64 is a binding site for Mg(2+). A small ATPAse domain (RuvB-S) region spans residues Asn180 to Glu250. Residues His253–Glu342 are head domain (RuvB-H). DNA is bound by residues Arg289, Arg308, and Arg313.

It belongs to the RuvB family. Homohexamer. Forms an RuvA(8)-RuvB(12)-Holliday junction (HJ) complex. HJ DNA is sandwiched between 2 RuvA tetramers; dsDNA enters through RuvA and exits via RuvB. An RuvB hexamer assembles on each DNA strand where it exits the tetramer. Each RuvB hexamer is contacted by two RuvA subunits (via domain III) on 2 adjacent RuvB subunits; this complex drives branch migration. In the full resolvosome a probable DNA-RuvA(4)-RuvB(12)-RuvC(2) complex forms which resolves the HJ.

It localises to the cytoplasm. The catalysed reaction is ATP + H2O = ADP + phosphate + H(+). Its function is as follows. The RuvA-RuvB-RuvC complex processes Holliday junction (HJ) DNA during genetic recombination and DNA repair, while the RuvA-RuvB complex plays an important role in the rescue of blocked DNA replication forks via replication fork reversal (RFR). RuvA specifically binds to HJ cruciform DNA, conferring on it an open structure. The RuvB hexamer acts as an ATP-dependent pump, pulling dsDNA into and through the RuvAB complex. RuvB forms 2 homohexamers on either side of HJ DNA bound by 1 or 2 RuvA tetramers; 4 subunits per hexamer contact DNA at a time. Coordinated motions by a converter formed by DNA-disengaged RuvB subunits stimulates ATP hydrolysis and nucleotide exchange. Immobilization of the converter enables RuvB to convert the ATP-contained energy into a lever motion, pulling 2 nucleotides of DNA out of the RuvA tetramer per ATP hydrolyzed, thus driving DNA branch migration. The RuvB motors rotate together with the DNA substrate, which together with the progressing nucleotide cycle form the mechanistic basis for DNA recombination by continuous HJ branch migration. Branch migration allows RuvC to scan DNA until it finds its consensus sequence, where it cleaves and resolves cruciform DNA. The polypeptide is Holliday junction branch migration complex subunit RuvB (Rickettsia felis (strain ATCC VR-1525 / URRWXCal2) (Rickettsia azadi)).